Reading from the N-terminus, the 389-residue chain is Chalcone synthase E (389 aa).

Residue Cys-164 is part of the active site.

It belongs to the thiolase-like superfamily. Chalcone/stilbene synthases family.

It carries out the reaction (E)-4-coumaroyl-CoA + 3 malonyl-CoA + 3 H(+) = 2',4,4',6'-tetrahydroxychalcone + 3 CO2 + 4 CoA. Its pathway is secondary metabolite biosynthesis; flavonoid biosynthesis. In terms of biological role, the primary product of this enzyme is 4,2',4',6'-tetrahydroxychalcone (also termed naringenin-chalcone or chalcone) which can under specific conditions spontaneously isomerize into naringenin. The polypeptide is Chalcone synthase E (CHSE) (Ipomoea purpurea (Common morning glory)).